The following is a 150-amino-acid chain: MKFIEVHTDGSCLGNPGPGGWAALLRYNGREKELAGGEAVSTNNRMELMAAIMALETLTEPCQIVLHTDSQYVRQGITEWMPGWVRRNWKTAGGDPVKNRELWERLHAATQRHRIDWRWVKGHNGDPDNERVDVLARNQAIAQRDGLATS.

An RNase H type-1 domain is found at 1–141 (MKFIEVHTDG…VDVLARNQAI (141 aa)). Residues Asp-9, Glu-47, Asp-69, and Asp-133 each coordinate Mg(2+).

Belongs to the RNase H family. Monomer. The cofactor is Mg(2+).

It is found in the cytoplasm. It carries out the reaction Endonucleolytic cleavage to 5'-phosphomonoester.. Functionally, endonuclease that specifically degrades the RNA of RNA-DNA hybrids. The chain is Ribonuclease H from Xanthomonas euvesicatoria pv. vesicatoria (strain 85-10) (Xanthomonas campestris pv. vesicatoria).